The chain runs to 343 residues: Transcription factor MYB11 (343 aa).

2 consecutive HTH myb-type domains span residues 9–61 (KVGI…INYL) and 62–116 (RSDI…SRKL). DNA-binding regions (H-T-H motif) lie at residues 37 to 61 (WRSLPKNAGLKRCGKSCRLRWINYL) and 89 to 112 (WSTIASNLPGRTDNEIKNYWNSHL). Residues 126–146 (ANTVENAPPPPKRRPGRTSRS) are disordered.

As to expression, expressed in seedlings, roots, cotyledons, leaves and apical meristems.

The protein resides in the nucleus. Functionally, modulates overall growth by reducing the proliferation activity of meristematic cells and delaying development. Flavonol-specific transcription activator involved in the regulation of several genes of flavonoid biosynthesis. Activates the expression of CHS, CHI, F3H and FLS1. Confers tolerance to UV-B. This is Transcription factor MYB11 from Arabidopsis thaliana (Mouse-ear cress).